The sequence spans 310 residues: N-acetyl-gamma-glutamyl-phosphate reductase (310 aa).

Cys-117 is a catalytic residue.

Belongs to the NAGSA dehydrogenase family. Type 2 subfamily.

The protein resides in the cytoplasm. It carries out the reaction N-acetyl-L-glutamate 5-semialdehyde + phosphate + NADP(+) = N-acetyl-L-glutamyl 5-phosphate + NADPH + H(+). The protein operates within amino-acid biosynthesis; L-arginine biosynthesis; N(2)-acetyl-L-ornithine from L-glutamate: step 3/4. Its function is as follows. Catalyzes the NADPH-dependent reduction of N-acetyl-5-glutamyl phosphate to yield N-acetyl-L-glutamate 5-semialdehyde. The sequence is that of N-acetyl-gamma-glutamyl-phosphate reductase from Rhizobium leguminosarum bv. trifolii (strain WSM2304).